Consider the following 492-residue polypeptide: Ethanolamine-phosphate phospho-lyase (492 aa).

K280 carries the N6-(pyridoxal phosphate)lysine modification. The disordered stretch occupies residues 462–492 (ASDENGLVHPSNGNSHKHTSTIPLSKKTKRN).

The protein belongs to the class-III pyridoxal-phosphate-dependent aminotransferase family. In terms of assembly, homotetramer. The cofactor is pyridoxal 5'-phosphate.

The protein resides in the mitochondrion. The enzyme catalyses phosphoethanolamine + H2O = acetaldehyde + NH4(+) + phosphate. Its function is as follows. Catalyzes the pyridoxal-phosphate-dependent breakdown of phosphoethanolamine, converting it to ammonia, inorganic phosphate and acetaldehyde. This chain is Ethanolamine-phosphate phospho-lyase (etnppl), found in Danio rerio (Zebrafish).